We begin with the raw amino-acid sequence, 306 residues long: Acetaldehyde dehydrogenase 3 (306 aa).

Cys131 acts as the Acyl-thioester intermediate in catalysis. NAD(+)-binding positions include 162-170 and Asn273; that span reads SVGPGTRKN.

It belongs to the acetaldehyde dehydrogenase family.

It catalyses the reaction acetaldehyde + NAD(+) + CoA = acetyl-CoA + NADH + H(+). The sequence is that of Acetaldehyde dehydrogenase 3 from Burkholderia lata (strain ATCC 17760 / DSM 23089 / LMG 22485 / NCIMB 9086 / R18194 / 383).